The primary structure comprises 465 residues: Argininosuccinate lyase (465 aa).

The protein belongs to the lyase 1 family. Argininosuccinate lyase subfamily.

It localises to the cytoplasm. It catalyses the reaction 2-(N(omega)-L-arginino)succinate = fumarate + L-arginine. Its pathway is amino-acid biosynthesis; L-arginine biosynthesis; L-arginine from L-ornithine and carbamoyl phosphate: step 3/3. This chain is Argininosuccinate lyase, found in Bradyrhizobium diazoefficiens (strain JCM 10833 / BCRC 13528 / IAM 13628 / NBRC 14792 / USDA 110).